The primary structure comprises 156 residues: Cyanate hydratase (156 aa).

Active-site residues include arginine 96, glutamate 99, and serine 122.

It belongs to the cyanase family. Homodecamer composed of five homodimers.

The catalysed reaction is cyanate + hydrogencarbonate + 3 H(+) = NH4(+) + 2 CO2. Catalyzes the reaction of cyanate with bicarbonate to produce ammonia and carbon dioxide. The protein is Cyanate hydratase (cynS) of Escherichia coli O157:H7.